The following is a 318-amino-acid chain: Ribonuclease Z (318 aa).

Zn(2+) contacts are provided by H63, H65, D67, H68, H142, D213, and H273. Catalysis depends on D67, which acts as the Proton acceptor.

Belongs to the RNase Z family. As to quaternary structure, homodimer. Zn(2+) is required as a cofactor.

The enzyme catalyses Endonucleolytic cleavage of RNA, removing extra 3' nucleotides from tRNA precursor, generating 3' termini of tRNAs. A 3'-hydroxy group is left at the tRNA terminus and a 5'-phosphoryl group is left at the trailer molecule.. In terms of biological role, zinc phosphodiesterase, which displays some tRNA 3'-processing endonuclease activity. Probably involved in tRNA maturation, by removing a 3'-trailer from precursor tRNA. The protein is Ribonuclease Z of Leuconostoc mesenteroides subsp. mesenteroides (strain ATCC 8293 / DSM 20343 / BCRC 11652 / CCM 1803 / JCM 6124 / NCDO 523 / NBRC 100496 / NCIMB 8023 / NCTC 12954 / NRRL B-1118 / 37Y).